Reading from the N-terminus, the 319-residue chain is CD2 antigen cytoplasmic tail-binding protein 2 homolog (319 aa).

Disordered stretches follow at residues 1 to 57 (MASK…EDDV) and 105 to 124 (NAFD…KNEP). The span at 12–24 (KVKEESFKKHTLD) shows a compositional bias: basic and acidic residues. Phosphoserine occurs at positions 25 and 30. Residues 25–47 (SDEEDSDDYEREYLNDSDIEGGE) are compositionally biased toward acidic residues. Phosphotyrosine is present on Tyr37. Ser41 carries the post-translational modification Phosphoserine. Basic and acidic residues predominate over residues 109-124 (PAKDEENSSDEEKNEP). Positions 260–316 (EVTWEFKWSQDETDIQGPFSTEKMLKWSQENYFKNGVYVRKCGENTNFYTSNRIDFD) constitute a GYF domain.

It is found in the nucleus. In terms of biological role, required for embryonic epithelial tissue repair, but not for the assembly of the actomyosin cable at the wound edge. Probably acts downstream of rl in the regulation of Ddc and msn transcription to promote wound healing. The sequence is that of CD2 antigen cytoplasmic tail-binding protein 2 homolog (holn1) from Drosophila melanogaster (Fruit fly).